Reading from the N-terminus, the 510-residue chain is Flavonoid 3',5'-hydroxylase (510 aa).

Cys447 is a heme binding site.

It belongs to the cytochrome P450 family. Heme is required as a cofactor.

The catalysed reaction is a 3',5'-unsubstituted flavanone + 2 reduced [NADPH--hemoprotein reductase] + 2 O2 = a 3',5'-dihydroxyflavanone + 2 oxidized [NADPH--hemoprotein reductase] + 2 H2O + 2 H(+). It participates in pigment biosynthesis; anthocyanin biosynthesis. Functionally, catalyzes the 3'5'-hydroxylation of naringenin and eriodictyol to form 5,7,3,'4',5'-pentahydroxyflavanone and 3',5'-hydroxylation of dihydrokaempferol and dihydroquercetin to form dihydromyricetin. This chain is Flavonoid 3',5'-hydroxylase (CYP75A7), found in Eustoma exaltatum subsp. russellianum (Bluebells).